The sequence spans 437 residues: Enolase (437 aa).

Gln162 provides a ligand contact to (2R)-2-phosphoglycerate. Glu204 acts as the Proton donor in catalysis. 3 residues coordinate Mg(2+): Asp251, Glu297, and Asp324. 4 residues coordinate (2R)-2-phosphoglycerate: Lys349, Arg378, Ser379, and Lys400. The active-site Proton acceptor is the Lys349.

It belongs to the enolase family. Mg(2+) serves as cofactor.

The protein localises to the cytoplasm. Its subcellular location is the secreted. The protein resides in the cell surface. The catalysed reaction is (2R)-2-phosphoglycerate = phosphoenolpyruvate + H2O. It functions in the pathway carbohydrate degradation; glycolysis; pyruvate from D-glyceraldehyde 3-phosphate: step 4/5. In terms of biological role, catalyzes the reversible conversion of 2-phosphoglycerate (2-PG) into phosphoenolpyruvate (PEP). It is essential for the degradation of carbohydrates via glycolysis. The polypeptide is Enolase (Chlorobium phaeobacteroides (strain DSM 266 / SMG 266 / 2430)).